The chain runs to 322 residues: ATP-dependent 6-phosphofructokinase (322 aa).

Residue G11 coordinates ATP. Residue 21-25 (RAVAR) participates in ADP binding. ATP-binding positions include 72–73 (RY) and 102–105 (GDGS). Residue D103 coordinates Mg(2+). 125 to 127 (TID) provides a ligand contact to substrate. D127 serves as the catalytic Proton acceptor. R154 lines the ADP pocket. Substrate is bound by residues R162 and 169–171 (MGR). Residues 185–187 (GAD) and 213–215 (KDY) each bind ADP. Residues E222, R246, and 252-255 (HVQR) each bind substrate.

Belongs to the phosphofructokinase type A (PFKA) family. ATP-dependent PFK group I subfamily. Prokaryotic clade 'B1' sub-subfamily. In terms of assembly, homotetramer. Mg(2+) is required as a cofactor.

The protein localises to the cytoplasm. It carries out the reaction beta-D-fructose 6-phosphate + ATP = beta-D-fructose 1,6-bisphosphate + ADP + H(+). It participates in carbohydrate degradation; glycolysis; D-glyceraldehyde 3-phosphate and glycerone phosphate from D-glucose: step 3/4. Its activity is regulated as follows. Allosterically activated by ADP and other diphosphonucleosides, and allosterically inhibited by phosphoenolpyruvate. Its function is as follows. Catalyzes the phosphorylation of D-fructose 6-phosphate to fructose 1,6-bisphosphate by ATP, the first committing step of glycolysis. The protein is ATP-dependent 6-phosphofructokinase of Pediococcus pentosaceus (strain ATCC 25745 / CCUG 21536 / LMG 10740 / 183-1w).